Consider the following 350-residue polypeptide: Dihydroorotate dehydrogenase (quinone) (350 aa).

FMN contacts are provided by residues 61-65 (AGLDK) and Thr-85. Lys-65 is a substrate binding site. A substrate-binding site is contributed by 110 to 114 (NRMGF). Positions 139 and 172 each coordinate FMN. Asn-172 is a substrate binding site. Catalysis depends on Ser-175, which acts as the Nucleophile. Asn-177 serves as a coordination point for substrate. Residues Lys-217 and Thr-245 each coordinate FMN. 246–247 (NT) is a binding site for substrate. FMN contacts are provided by residues Gly-268, Gly-297, and 318–319 (YS).

Belongs to the dihydroorotate dehydrogenase family. Type 2 subfamily. In terms of assembly, monomer. It depends on FMN as a cofactor.

The protein localises to the cell membrane. It carries out the reaction (S)-dihydroorotate + a quinone = orotate + a quinol. It participates in pyrimidine metabolism; UMP biosynthesis via de novo pathway; orotate from (S)-dihydroorotate (quinone route): step 1/1. Functionally, catalyzes the conversion of dihydroorotate to orotate with quinone as electron acceptor. This is Dihydroorotate dehydrogenase (quinone) from Flavobacterium lutescens.